The following is a 382-amino-acid chain: MSGDSSGRRPEGRGRGRDPHRDRTRSRSRSRSPLSPGSRRGAAPERREAPERPGLEDTEPSDSGDEMIDPASLEEETDPSLCRQIRHQYRALINSVQQNREDILNASDKLTEVLEEANTLFNGVSRAREAVLDAHFLVLASDLGKEKAKQLRSDLNSFDMLRYVETLLTHMGVNPLEAEELIRDEDSSDLEFIVYDSWKISGKTAENTFNKTHTFHFLLGSIQGECPVPKPRIERPRKVRMIEEQQAMPAQLKRMEESHQEATEKEVERILGLLQTYFQEDPDTPMSFFDFVVDPHSFPRTVENIFHVSFIIRDGFARIRLDRDRLPVIEPVNINEESGGNTQIRNQAIIALSYRDWEEIVRTFEISEPVITSSQSQQRLSA.

Residues 1-21 (MSGDSSGRRPEGRGRGRDPHR) show a composition bias toward basic and acidic residues. Positions 1 to 80 (MSGDSSGRRP…ASLEEETDPS (80 aa)) are disordered. Residues 31–41 (RSPLSPGSRRG) show a composition bias toward low complexity. Basic and acidic residues predominate over residues 42 to 55 (AAPERREAPERPGL). The segment covering 56–78 (EDTEPSDSGDEMIDPASLEEETD) has biased composition (acidic residues). At Thr342 the chain carries Phosphothreonine. Ser374 is modified (phosphoserine).

The protein belongs to the NSE4 family. As to quaternary structure, component of the SMC5-SMC6 complex which consists at least of SMC5, SMC6, NSMCE2, NSMCE1, NSMCE4A or EID3 and NSMCE3. NSMCE1, NSMCE4A or EID3 and NSMCE3 probably form a subcomplex that bridges the head domains of the SMC5:SMC6 heterodimer. Interacts with NSMCE3.

Its subcellular location is the nucleus. It localises to the chromosome. The protein resides in the telomere. Its function is as follows. Component of the SMC5-SMC6 complex, a complex involved in repair of DNA double-strand breaks by homologous recombination. The complex may promote sister chromatid homologous recombination by recruiting the SMC1-SMC3 cohesin complex to double-strand breaks. The complex is required for telomere maintenance via recombination and mediates sumoylation of shelterin complex (telosome) components. This Bos taurus (Bovine) protein is Non-structural maintenance of chromosomes element 4 homolog A (NSMCE4A).